Here is a 579-residue protein sequence, read N- to C-terminus: DNA ligase 1 (579 aa).

ATP is bound at residue Glu244. Lys246 (N6-AMP-lysine intermediate) is an active-site residue. Residues Arg251, Arg266, Glu296, Phe342, Arg419, and Lys425 each contribute to the ATP site.

It belongs to the ATP-dependent DNA ligase family. Mg(2+) is required as a cofactor.

It carries out the reaction ATP + (deoxyribonucleotide)n-3'-hydroxyl + 5'-phospho-(deoxyribonucleotide)m = (deoxyribonucleotide)n+m + AMP + diphosphate.. Functionally, DNA ligase that seals nicks in double-stranded DNA during DNA replication, DNA recombination and DNA repair. The protein is DNA ligase 1 of Methanosarcina mazei (strain ATCC BAA-159 / DSM 3647 / Goe1 / Go1 / JCM 11833 / OCM 88) (Methanosarcina frisia).